We begin with the raw amino-acid sequence, 195 residues long: Glycerol-3-phosphate acyltransferase (195 aa).

A run of 5 helical transmembrane segments spans residues 3–23 (EAALLVLCYLLGSIPFSYFFT), 51–71 (GVALLAFLGDLLKGLLAAWIG), 79–99 (LLVICVILAVIGHIYPVFLGF), 111–131 (IILFLMPDVTGILLLIFLAIV), and 153–173 (LAMGKPWSYVVIGILMAALVV).

The protein belongs to the PlsY family. As to quaternary structure, probably interacts with PlsX.

Its subcellular location is the cell membrane. The catalysed reaction is an acyl phosphate + sn-glycerol 3-phosphate = a 1-acyl-sn-glycero-3-phosphate + phosphate. It participates in lipid metabolism; phospholipid metabolism. Its function is as follows. Catalyzes the transfer of an acyl group from acyl-phosphate (acyl-PO(4)) to glycerol-3-phosphate (G3P) to form lysophosphatidic acid (LPA). This enzyme utilizes acyl-phosphate as fatty acyl donor, but not acyl-CoA or acyl-ACP. The polypeptide is Glycerol-3-phosphate acyltransferase (Syntrophomonas wolfei subsp. wolfei (strain DSM 2245B / Goettingen)).